Here is a 492-residue protein sequence, read N- to C-terminus: Trigger factor (492 aa).

The PPIase FKBP-type domain maps to 164–249 (GDLVVVDFVG…VSDVRVPRKA (86 aa)). Residues 440 to 492 (EAEEDSIGKHDHDHDHKEKASDKPKAKKAAAPKKKAAPKKKAAPKAEKKSSDE) are disordered. Residues 445–463 (SIGKHDHDHDHKEKASDKP) are compositionally biased toward basic and acidic residues. Residues 464 to 482 (KAKKAAAPKKKAAPKKKAA) show a composition bias toward basic residues. The segment covering 483–492 (PKAEKKSSDE) has biased composition (basic and acidic residues).

The protein belongs to the FKBP-type PPIase family. Tig subfamily.

It localises to the cytoplasm. The catalysed reaction is [protein]-peptidylproline (omega=180) = [protein]-peptidylproline (omega=0). Functionally, involved in protein export. Acts as a chaperone by maintaining the newly synthesized protein in an open conformation. Functions as a peptidyl-prolyl cis-trans isomerase. This chain is Trigger factor, found in Zymomonas mobilis subsp. mobilis (strain ATCC 31821 / ZM4 / CP4).